The chain runs to 646 residues: FLETDNEGNGILRRRDIKNALYGFDIPLTPREFEKLWASYDTEGKGHITYQEFLQKLGVNYSPAVHRPCAEDYFNFMGHFTKPQQLQEEMKELQQSTEKAVAARDKLVDCYQDISKAFTKIDKSKTNYISICKMQKVLEECGCSLTEGELTNLLNSWGVSRHDNSINYLDFLRAVENSKSTGAQPKEKEESMPINFATLNPQEVVRKIQEVVESSQLALSTAFSALDKEDTGFVKSTEFGQVLKDFCHKLTDNQYHYFLRKLRIHLTPYINWKYFLQNFSCFLEETAEEWAEKMPKGPPPTSPKAMASRDILARLHKAVTSHYHAITQEFENFDTMKTNTISREEFRAVCNRNVQILTDEQFDRLWNEMPVNAKGRLKYPDFLSRFSSERAATPTATGDSAAAQRGSSVPDVSEGIRSALSLPNQELRPGSKPQSHPCTAASTTAIPGTPPLQNCDPIESRLRKRIQGCWRQLLKECKEKDVARQGDISASEFLALVEKFNLDISKEECQQLIIKYDLKNNGKFAYCDFIQSCVLLLKAKESSLMQRMKIQNAHKMKDSGAETSSFYSALLRIQPKIVHCWRPMRRTFKSYDEAGTGLLSVADFRTVLRQYSINLSEEEFFHILEYYDKTLSSNISYNDFLRAFLQ.

6 EF-hand domains span residues 1–27, 28–63, 109–144, 214–249, 321–356, and 357–392; these read FLET…FDIP, LTPR…NYSP, DCYQ…CGCS, SSQL…FCHK, SHYH…NVQI, and LTDE…ERAA. Threonine 29 carries the phosphothreonine modification. The segment at 390-452 is disordered; sequence RAATPTATGD…TTAIPGTPPL (63 aa). Positions 432-446 are enriched in polar residues; sequence KPQSHPCTAASTTAI. Serine 435 bears the Phosphoserine mark. Threonine 439 and threonine 449 each carry phosphothreonine. Residues 448–646 are interaction with PARK7; it reads GTPPLQNCDP…YNDFLRAFLQ (199 aa). EF-hand domains follow at residues 468–503, 504–539, 579–614, and 615–646; these read GCWR…FNLD, ISKE…LLKA, HCWR…YSIN, and LSEE…AFLQ. Positions 552–646 are interaction with AR; that stretch reads NAHKMKDSGA…YNDFLRAFLQ (95 aa).

In terms of assembly, microtubule inner protein component of sperm flagellar doublet microtubules. Binds PARK7. Part of a ternary complex containing PARK7, EFCAB6/DJBP and AR.

The protein resides in the nucleus. It is found in the cytoplasm. It localises to the cytoskeleton. The protein localises to the flagellum axoneme. Its function is as follows. Negatively regulates the androgen receptor by recruiting histone deacetylase complex, and protein DJ-1 antagonizes this inhibition by abrogation of this complex. Microtubule inner protein (MIP) part of the dynein-decorated doublet microtubules (DMTs) in cilia axoneme, which is required for motile cilia beating. The chain is EF-hand calcium-binding domain-containing protein 6 (EFCAB6) from Macaca fascicularis (Crab-eating macaque).